The following is a 389-amino-acid chain: MVSVSGIRKVQRAEGPATVLAIGTANPPNCVDQSTYADYYFRVTNGEHMTDLKKKFQRICERTQIKNRHMYLTEEILKENPNMCAYKAPSLDAREDMMIREVPRVGKEAATKAIKEWGQPMSKITHLIFCTTSGVALPGVDYELIVLLGLDPSVKRYMMYHQGCFAGGTVLRLAKDLAENNKDARVLIVCSENTAVTFRGPNETDMDSLVGQALFADGAAAIIIGSDPVPEVENPIFEIVSTDQQLVPNSHGAIGGLLREVGLTFYLNKSVPDIISQNINGALSKAFDPLGISDYNSIFWIAHLGGRAILDQVEQKVNLKPEKMKATRDVLSNYGNMSSACVFFIMDLMRKKSLETGLKTTGEGLDWGVLFGFGPGLTIETVVLRSMAI.

Substrate is bound at residue 55 to 58 (KFQR). Cys-164 is a catalytic residue. Substrate contacts are provided by residues Leu-267 and 305 to 307 (GGR).

This sequence belongs to the thiolase-like superfamily. Chalcone/stilbene synthases family. Homodimer.

It is found in the cytoplasm. It carries out the reaction 4-coumaroyl-CoA + 3 malonyl-CoA + 3 H(+) = trans-resveratrol + 4 CO2 + 4 CoA. It functions in the pathway phytoalexin biosynthesis; 3,4',5-trihydroxystilbene biosynthesis; 3,4',5-trihydroxystilbene from trans-4-coumarate: step 2/2. This chain is Stilbene synthase 1, found in Arachis hypogaea (Peanut).